The primary structure comprises 81 residues: Short neurotoxin 1 (81 aa).

A signal peptide spans 1 to 21 (MKTLLLTLVVVTIVCLDLGYT). 4 cysteine pairs are disulfide-bonded: Cys24–Cys43, Cys38–Cys60, Cys62–Cys73, and Cys74–Cys79.

Belongs to the three-finger toxin family. Short-chain subfamily. Type I alpha-neurotoxin sub-subfamily. In terms of tissue distribution, expressed by the venom gland.

The protein localises to the secreted. In terms of biological role, binds to muscle nicotinic acetylcholine receptor (nAChR) and inhibit acetylcholine from binding to the receptor, thereby impairing neuromuscular transmission. The polypeptide is Short neurotoxin 1 (Cryptophis nigrescens (Eastern small-eyed snake)).